A 261-amino-acid chain; its full sequence is tRNA pseudouridine synthase A (261 aa).

D51 functions as the Nucleophile in the catalytic mechanism. Y109 serves as a coordination point for substrate.

It belongs to the tRNA pseudouridine synthase TruA family. In terms of assembly, homodimer.

It carries out the reaction uridine(38/39/40) in tRNA = pseudouridine(38/39/40) in tRNA. Its function is as follows. Formation of pseudouridine at positions 38, 39 and 40 in the anticodon stem and loop of transfer RNAs. The sequence is that of tRNA pseudouridine synthase A from Shewanella baltica (strain OS155 / ATCC BAA-1091).